The following is a 495-amino-acid chain: Glycogen synthase (495 aa).

Lysine 24 is an ADP-alpha-D-glucose binding site.

This sequence belongs to the glycosyltransferase 1 family. Bacterial/plant glycogen synthase subfamily.

The catalysed reaction is [(1-&gt;4)-alpha-D-glucosyl](n) + ADP-alpha-D-glucose = [(1-&gt;4)-alpha-D-glucosyl](n+1) + ADP + H(+). It participates in glycan biosynthesis; glycogen biosynthesis. Functionally, synthesizes alpha-1,4-glucan chains using ADP-glucose. This is Glycogen synthase from Nitrosomonas europaea (strain ATCC 19718 / CIP 103999 / KCTC 2705 / NBRC 14298).